Reading from the N-terminus, the 663-residue chain is UvrABC system protein B (663 aa).

Over residues 1-10 the composition is skewed to basic and acidic residues; the sequence is MIDKRDDKPF. The tract at residues 1 to 23 is disordered; it reads MIDKRDDKPFKLKSKYKPSGDQP. One can recognise a Helicase ATP-binding domain in the interval 31–418; the sequence is DNIEGGEKAQ…TNTIIEQIIR (388 aa). 44-51 lines the ATP pocket; the sequence is GATGTGKT. The Beta-hairpin motif lies at 97–120; sequence YYDYYQPEAYVPSSDTYIEKDSSV. Positions 435 to 601 constitute a Helicase C-terminal domain; sequence QMDDLLGEIN…TIKKDIRGLI (167 aa). The region spanning 627-662 is the UVR domain; it reads KEAINALQKQMQEAAELLDFELAAQMRDLILELKLM.

It belongs to the UvrB family. Forms a heterotetramer with UvrA during the search for lesions. Interacts with UvrC in an incision complex.

It is found in the cytoplasm. The UvrABC repair system catalyzes the recognition and processing of DNA lesions. A damage recognition complex composed of 2 UvrA and 2 UvrB subunits scans DNA for abnormalities. Upon binding of the UvrA(2)B(2) complex to a putative damaged site, the DNA wraps around one UvrB monomer. DNA wrap is dependent on ATP binding by UvrB and probably causes local melting of the DNA helix, facilitating insertion of UvrB beta-hairpin between the DNA strands. Then UvrB probes one DNA strand for the presence of a lesion. If a lesion is found the UvrA subunits dissociate and the UvrB-DNA preincision complex is formed. This complex is subsequently bound by UvrC and the second UvrB is released. If no lesion is found, the DNA wraps around the other UvrB subunit that will check the other stand for damage. This is UvrABC system protein B from Streptococcus pyogenes serotype M28 (strain MGAS6180).